Reading from the N-terminus, the 181-residue chain is MQQWLEIGKVVAAQGLRGEVRVQPATDFAERLTRPGARLVGRSLDDGRVFRLQSGRAIPGKDLFVCRFEGVEERNAAEKLVGSTLWIGAAERPVLAAGEFWLPDLMGVRVFRQDTGEAIGEVSDMTRAGNDLLVIRLSGGKTVMVPFVHALVPVVDLEAGRIEVVAIPGLLDPEAAEADEA.

Positions 97 to 170 (AGEFWLPDLM…RIEVVAIPGL (74 aa)) constitute a PRC barrel domain.

It belongs to the RimM family. As to quaternary structure, binds ribosomal protein uS19.

The protein localises to the cytoplasm. In terms of biological role, an accessory protein needed during the final step in the assembly of 30S ribosomal subunit, possibly for assembly of the head region. Essential for efficient processing of 16S rRNA. May be needed both before and after RbfA during the maturation of 16S rRNA. It has affinity for free ribosomal 30S subunits but not for 70S ribosomes. In Gloeobacter violaceus (strain ATCC 29082 / PCC 7421), this protein is Ribosome maturation factor RimM.